We begin with the raw amino-acid sequence, 549 residues long: Chaperonin GroEL (549 aa).

ATP is bound by residues 30 to 33 (TLGP), K51, 87 to 91 (DGTTT), G415, and D497.

This sequence belongs to the chaperonin (HSP60) family. In terms of assembly, forms a cylinder of 14 subunits composed of two heptameric rings stacked back-to-back. Interacts with the co-chaperonin GroES.

The protein localises to the cytoplasm. It carries out the reaction ATP + H2O + a folded polypeptide = ADP + phosphate + an unfolded polypeptide.. Functionally, together with its co-chaperonin GroES, plays an essential role in assisting protein folding. The GroEL-GroES system forms a nano-cage that allows encapsulation of the non-native substrate proteins and provides a physical environment optimized to promote and accelerate protein folding. This chain is Chaperonin GroEL, found in Pectobacterium atrosepticum (strain SCRI 1043 / ATCC BAA-672) (Erwinia carotovora subsp. atroseptica).